The primary structure comprises 187 residues: UPF0301 protein ETA_28320 (187 aa).

It belongs to the UPF0301 (AlgH) family.

In Erwinia tasmaniensis (strain DSM 17950 / CFBP 7177 / CIP 109463 / NCPPB 4357 / Et1/99), this protein is UPF0301 protein ETA_28320.